An 84-amino-acid polypeptide reads, in one-letter code: Anaphase-promoting complex subunit 11 (84 aa).

The Zn(2+) site is built by Cys23, Cys26, Cys34, Cys37, Cys44, Cys51, His53, His56, His58, Cys59, Cys73, and Cys76. The segment at 34–77 adopts an RING-type zinc-finger fold; the sequence is CPDCKVPGDDCPLVWGQCSHCFHMHCILKWLNAQQVQQHCPMCR.

It belongs to the RING-box family. The mammalian APC/C is composed at least of 14 distinct subunits ANAPC1, ANAPC2, CDC27/APC3, ANAPC4, ANAPC5, CDC16/APC6, ANAPC7, CDC23/APC8, ANAPC10, ANAPC11, CDC26/APC12, ANAPC13, ANAPC15 and ANAPC16 that assemble into a complex of at least 19 chains with a combined molecular mass of around 1.2 MDa; APC/C interacts with FZR1 and FBXO5. Interacts with the cullin domain of ANAPC2. Interacts with UBE2D2. Auto-ubiquitinated.

The protein resides in the cytoplasm. The protein localises to the nucleus. Its pathway is protein modification; protein ubiquitination. In terms of biological role, together with the cullin protein ANAPC2, constitutes the catalytic component of the anaphase promoting complex/cyclosome (APC/C), a cell cycle-regulated E3 ubiquitin ligase that controls progression through mitosis and the G1 phase of the cell cycle. The APC/C complex acts by mediating ubiquitination and subsequent degradation of target proteins: it mainly mediates the formation of 'Lys-11'-linked polyubiquitin chains and, to a lower extent, the formation of 'Lys-48'- and 'Lys-63'-linked polyubiquitin chains. The APC/C complex catalyzes assembly of branched 'Lys-11'-/'Lys-48'-linked branched ubiquitin chains on target proteins. May recruit the E2 ubiquitin-conjugating enzymes to the complex. The sequence is that of Anaphase-promoting complex subunit 11 (ANAPC11) from Bos taurus (Bovine).